A 560-amino-acid polypeptide reads, in one-letter code: Diphtheria toxin (560 aa).

Residues 1–25 (MSRKLFASILIGALLGIGAPPSAHA) form the signal peptide. NAD(+) is bound by residues histidine 46 and tyrosine 90. Glutamate 173 is an active-site residue. 2 cysteine pairs are disulfide-bonded: cysteine 211–cysteine 226 and cysteine 486–cysteine 496.

As to quaternary structure, homodimer.

It catalyses the reaction diphthamide-[translation elongation factor 2] + NAD(+) = N-(ADP-D-ribosyl)diphthamide-[translation elongation factor 2] + nicotinamide + H(+). Functionally, diphtheria toxin, produced by a phage infecting Corynebacterium diphtheriae, is a proenzyme that, after activation, catalyzes the covalent attachment of the ADP ribose moiety of NAD to elongation factor 2. Fragment A is responsible for enzymatic ADP-ribosylation of elongation factor 2, while fragment B is responsible for binding of toxin to cell receptors and entry of fragment A. This Corynephage omega protein is Diphtheria toxin.